The chain runs to 122 residues: Ribosome-binding factor A (122 aa).

Belongs to the RbfA family. In terms of assembly, monomer. Binds 30S ribosomal subunits, but not 50S ribosomal subunits or 70S ribosomes.

The protein resides in the cytoplasm. Functionally, one of several proteins that assist in the late maturation steps of the functional core of the 30S ribosomal subunit. Associates with free 30S ribosomal subunits (but not with 30S subunits that are part of 70S ribosomes or polysomes). Required for efficient processing of 16S rRNA. May interact with the 5'-terminal helix region of 16S rRNA. This Caldanaerobacter subterraneus subsp. tengcongensis (strain DSM 15242 / JCM 11007 / NBRC 100824 / MB4) (Thermoanaerobacter tengcongensis) protein is Ribosome-binding factor A.